The primary structure comprises 110 residues: uncharacterized protein (110 aa).

A helical transmembrane segment spans residues 29-49; that stretch reads GLAFIFFFLVAFYFFPAFWDL.

Its subcellular location is the membrane. This is an uncharacterized protein from Saccharomyces cerevisiae (strain ATCC 204508 / S288c) (Baker's yeast).